Here is a 420-residue protein sequence, read N- to C-terminus: Acyl-coenzyme A amino acid N-acyltransferase 2 (420 aa).

Residues Ser235, Asp329, and His363 each act as charge relay system in the active site. The short motif at 418–420 (SKL) is the Microbody targeting signal element.

Belongs to the C/M/P thioester hydrolase family.

It is found in the peroxisome. Functionally, acyltransferase which efficiently conjugates very long-chain and long-chain fatty acids to taurine. Shows no conjugation activity in the presence of glycine. The polypeptide is Acyl-coenzyme A amino acid N-acyltransferase 2 (Mus musculus (Mouse)).